The primary structure comprises 350 residues: GTPase Obg (350 aa).

An Obg domain is found at 1–175 (MFVDNIRIFA…GVFFMELRRI (175 aa)). The OBG-type G domain occupies 176 to 345 (ADAGLVGYPN…LRNRLDELVG (170 aa)). GTP-binding positions include 182–189 (GYPNAGKS), 207–211 (FTTLQ), 229–232 (DIPG), 299–302 (NKMD), and 326–328 (SAL). Mg(2+) is bound by residues S189 and T209.

It belongs to the TRAFAC class OBG-HflX-like GTPase superfamily. OBG GTPase family. In terms of assembly, monomer. Mg(2+) is required as a cofactor.

It localises to the cytoplasm. Functionally, an essential GTPase which binds GTP, GDP and possibly (p)ppGpp with moderate affinity, with high nucleotide exchange rates and a fairly low GTP hydrolysis rate. Plays a role in control of the cell cycle, stress response, ribosome biogenesis and in those bacteria that undergo differentiation, in morphogenesis control. This Akkermansia muciniphila (strain ATCC BAA-835 / DSM 22959 / JCM 33894 / BCRC 81048 / CCUG 64013 / CIP 107961 / Muc) protein is GTPase Obg.